The sequence spans 159 residues: uncharacterized protein (159 aa).

4 helical membrane passes run 5–27 (TLDL…RGFV), 34–51 (ASIL…KRLV), 61–83 (SILL…MLFL), and 103–125 (FGFF…LLHV).

It is found in the cell membrane. This is an uncharacterized protein from Treponema pallidum (strain Nichols).